A 147-amino-acid chain; its full sequence is TRAF-interacting protein with FHA domain-containing protein B (147 aa).

Positions 36 to 108 (LLVGRGQNTH…LGTINRISFS (73 aa)) constitute an FHA domain.

Interacts with TIFA. In terms of tissue distribution, expressed at high levels in spleen and at moderate levels in lung, thymus, and small intestine.

Its function is as follows. Inhibits TIFA-mediated TRAF6 activation possibly by inducing a conformational change in TIFA. The protein is TRAF-interacting protein with FHA domain-containing protein B of Mus musculus (Mouse).